Reading from the N-terminus, the 243-residue chain is Killer cell lectin-like receptor subfamily I member 1 (243 aa).

Over 1-80 (MPHSKHRDYT…RQGPKSAVWR (80 aa)) the chain is Cytoplasmic. 2 short sequence motifs (ITIM motif) span residues 16 to 21 (IPYTEL) and 47 to 52 (LKYAEL). The chain crosses the membrane as a helical; Signal-anchor for type II membrane protein span at residues 81–101 (VVTCVLGVLCVVLMITMGILV). The Extracellular segment spans residues 102–243 (PKLFSGQEEQ…KPYACEFNKM (142 aa)). Asn-123, Asn-191, Asn-194, Asn-200, and Asn-214 each carry an N-linked (GlcNAc...) asparagine glycan. Residues 137–239 (FGNNFYLFFR…CSSKKPYACE (103 aa)) enclose the C-type lectin domain. 2 disulfides stabilise this stretch: Cys-158–Cys-238 and Cys-217–Cys-230.

In terms of assembly, heterodimer with KLRE1. Interacts with PTPN6. As to expression, expressed in natural killer (NK) cells.

It is found in the cell membrane. Lectin-like receptor for natural killer (NK) cells. Heterodimer formation with KLRE1 mediates inhibition of NK cell cytolytic activity. The sequence is that of Killer cell lectin-like receptor subfamily I member 1 from Rattus norvegicus (Rat).